A 228-amino-acid chain; its full sequence is Urease accessory protein UreF (228 aa).

It belongs to the UreF family. In terms of assembly, ureD, UreF and UreG form a complex that acts as a GTP-hydrolysis-dependent molecular chaperone, activating the urease apoprotein by helping to assemble the nickel containing metallocenter of UreC. The UreE protein probably delivers the nickel.

Its subcellular location is the cytoplasm. In terms of biological role, required for maturation of urease via the functional incorporation of the urease nickel metallocenter. The chain is Urease accessory protein UreF from Yersinia enterocolitica serotype O:8 / biotype 1B (strain NCTC 13174 / 8081).